Here is a 162-residue protein sequence, read N- to C-terminus: Disulfide bond formation protein B (162 aa).

At 1–8 (MTPLFRKA) the chain is on the cytoplasmic side. A helical transmembrane segment spans residues 9–25 (VWLLFAVSVCAFAGSLA). The Periplasmic portion of the chain corresponds to 26-43 (AQYVLGMEPCVLCISQRL). Cys-35 and Cys-38 form a disulfide bridge. The chain crosses the membrane as a helical span at residues 44–60 (CVLATALCTAIVLMCRP). The Cytoplasmic segment spans residues 61–67 (RRRAGGL). The helical transmembrane segment at 68-85 (FGAVFISIPAVTGISVAA) threads the bilayer. The Periplasmic segment spans residues 86-141 (YQLWLQSLPPGTAPSCGAPWTFRLKGWPLFDWFEPVVRGFGNCAEPDYLLGIALPV). A disulfide bond links Cys-101 and Cys-128. A helical membrane pass occupies residues 142–160 (WSVAYFLAVVLTVWWAWAR). At 161–162 (AK) the chain is on the cytoplasmic side.

Belongs to the DsbB family.

The protein localises to the cell inner membrane. Required for disulfide bond formation in some periplasmic proteins. Acts by oxidizing the DsbA protein. The chain is Disulfide bond formation protein B from Neisseria meningitidis serogroup B (strain ATCC BAA-335 / MC58).